We begin with the raw amino-acid sequence, 494 residues long: Cysteine--tRNA ligase (494 aa).

Cysteine 29 provides a ligand contact to Zn(2+). The short motif at 31–41 (VTVYDHCHIGH) is the 'HIGH' region element. The Zn(2+) site is built by cysteine 209, histidine 234, and glutamate 238. A 'KMSKS' region motif is present at residues 266–270 (KMSKS). An ATP-binding site is contributed by lysine 269.

This sequence belongs to the class-I aminoacyl-tRNA synthetase family. As to quaternary structure, monomer. It depends on Zn(2+) as a cofactor.

It localises to the cytoplasm. It catalyses the reaction tRNA(Cys) + L-cysteine + ATP = L-cysteinyl-tRNA(Cys) + AMP + diphosphate. This is Cysteine--tRNA ligase from Geotalea uraniireducens (strain Rf4) (Geobacter uraniireducens).